A 301-amino-acid polypeptide reads, in one-letter code: Acetylglutamate kinase (301 aa).

Substrate contacts are provided by residues 72 to 73 (GG), Arg-94, and Asn-199.

This sequence belongs to the acetylglutamate kinase family. ArgB subfamily.

It localises to the cytoplasm. The enzyme catalyses N-acetyl-L-glutamate + ATP = N-acetyl-L-glutamyl 5-phosphate + ADP. It participates in amino-acid biosynthesis; L-arginine biosynthesis; N(2)-acetyl-L-ornithine from L-glutamate: step 2/4. Catalyzes the ATP-dependent phosphorylation of N-acetyl-L-glutamate. The chain is Acetylglutamate kinase from Bartonella tribocorum (strain CIP 105476 / IBS 506).